The following is a 603-amino-acid chain: Adenine deaminase (603 aa).

The protein belongs to the metallo-dependent hydrolases superfamily. Adenine deaminase family. Homodimer. The cofactor is Mn(2+).

The catalysed reaction is adenine + H2O + H(+) = hypoxanthine + NH4(+). The sequence is that of Adenine deaminase from Klebsiella pneumoniae (strain 342).